A 144-amino-acid polypeptide reads, in one-letter code: Sirohydrochlorin cobaltochelatase (144 aa).

The active-site Proton acceptor is the H9. H9 serves as a coordination point for Co(2+). Residue H9 participates in Ni(2+) binding. Substrate contacts are provided by residues E45 and 70 to 75 (LAPGNH). A Co(2+)-binding site is contributed by H75. Residue H75 coordinates Ni(2+). The disordered stretch occupies residues 89–112 (GDDEGGHHHHHDHEHHHHHHDTTA). The segment covering 95–108 (HHHHHDHEHHHHHH) has biased composition (basic residues).

It belongs to the CbiX family. CbiXS subfamily. As to quaternary structure, homotetramer; dimer of dimers.

It catalyses the reaction Co-sirohydrochlorin + 2 H(+) = sirohydrochlorin + Co(2+). The catalysed reaction is Ni-sirohydrochlorin + 2 H(+) = sirohydrochlorin + Ni(2+). It participates in cofactor biosynthesis; adenosylcobalamin biosynthesis; cob(II)yrinate a,c-diamide from sirohydrochlorin (anaerobic route): step 1/10. Functionally, catalyzes the insertion of Co(2+) into sirohydrochlorin as part of the anaerobic pathway to cobalamin biosynthesis. Involved in the biosynthesis of the unique nickel-containing tetrapyrrole coenzyme F430, the prosthetic group of methyl-coenzyme M reductase (MCR), which plays a key role in methanogenesis and anaerobic methane oxidation. Catalyzes the insertion of Ni(2+) into sirohydrochlorin to yield Ni-sirohydrochlorin. This Methanococcus maripaludis (strain DSM 14266 / JCM 13030 / NBRC 101832 / S2 / LL) protein is Sirohydrochlorin cobaltochelatase.